The primary structure comprises 178 residues: MSGGKYVDSEGHLYTVPIREQGNIYKPNNKAMADELSEKQVYDAHTKEIDLVNRDPKHLNDDVVKIDFEDVIAEPEGTHSFDGIWKASFTTFTVTKYWFYRLLSALFGIPMALIWGIYFAILSFLHIWAVVPCIKSFLIEIQCISRVYSIYIHTVCDPLFEAIGKIFSNVRISLQKEI.

Residue serine 2 is modified to N-acetylserine. Serine 2 is subject to Phosphoserine. Residues 2–94 form a required for homooligomerization region; sequence SGGKYVDSEG…WKASFTTFTV (93 aa). Residues 2–104 are Cytoplasmic-facing; sequence SGGKYVDSEG…TKYWFYRLLS (103 aa). Lysine 5 is modified (N6-acetyllysine; alternate). Residue lysine 5 forms a Glycyl lysine isopeptide (Lys-Gly) (interchain with G-Cter in ubiquitin); alternate linkage. Tyrosine 6 carries the phosphotyrosine modification. Serine 9 is modified (phosphoserine). Phosphotyrosine; by ABL1 is present on tyrosine 14. Position 25 is a phosphotyrosine (tyrosine 25). Glycyl lysine isopeptide (Lys-Gly) (interchain with G-Cter in ubiquitin) cross-links involve residues lysine 26 and lysine 30. The residue at position 37 (serine 37) is a Phosphoserine. Residues lysine 39, lysine 47, and lysine 57 each participate in a glycyl lysine isopeptide (Lys-Gly) (interchain with G-Cter in ubiquitin) cross-link. Residues 82-94 are interaction with CAVIN3; that stretch reads DGIWKASFTTFTV. The helical intramembrane region spans 105 to 125; that stretch reads ALFGIPMALIWGIYFAILSFL. At 126-178 the chain is on the cytoplasmic side; the sequence is HIWAVVPCIKSFLIEIQCISRVYSIYIHTVCDPLFEAIGKIFSNVRISLQKEI. Positions 131–142 are interacts with SPRY1, SPRY2, SPRY3 and SPRY4; the sequence is VPCIKSFLIEIQ. Residues cysteine 133, cysteine 143, and cysteine 156 are each lipidated (S-palmitoyl cysteine). An interacts with SPRY1, SPRY2, and SPRY4 region spans residues 149–160; sequence SIYIHTVCDPLF. Residues 167–178 form an interacts with SPRY1, SPRY2, SPRY3 and SPRY4 region; it reads FSNVRISLQKEI.

Belongs to the caveolin family. As to quaternary structure, homooligomer. Interacts with GLIPR2. Interacts with NOSTRIN. Interacts with SNAP25 and STX1A. Interacts (via the N-terminus) with DPP4; the interaction is direct. Interacts with CTNNB1, CDH1 and JUP. Interacts with PACSIN2; this interaction induces membrane tubulation. Interacts with SLC7A9. Interacts with BMX and BTK. Interacts with TGFBR1. Interacts with CAVIN3 (via leucine-zipper domain) in a cholesterol-sensitive manner. Interacts with CAVIN1. Interacts with EHD2 in a cholesterol-dependent manner. Forms a ternary complex with UBXN6 and VCP; mediates CAV1 targeting to lysosomes for degradation. Interacts with ABCG1; this interaction regulates ABCG1-mediated cholesterol efflux. Interacts with NEU3; this interaction enhances NEU3 sialidase activity within caveola. Interacts (via C-terminus) with SPRY1, SPRY2 (via C-terminus), SPRY3, and SPRY4. Interacts with IGFBP5; this interaction allows trafficking of IGFBP5 from the plasma membrane to the nucleus. In terms of processing, phosphorylated at Tyr-14 by ABL1 in response to oxidative stress. Post-translationally, ubiquitinated. Undergo monoubiquitination and multi- and/or polyubiquitination. Monoubiquitination of N-terminal lysines promotes integration in a ternary complex with UBXN6 and VCP which promotes oligomeric CAV1 targeting to lysosomes for degradation. Ubiquitinated by ZNRF1; leading to degradation and modulation of the TLR4-mediated immune response.

The protein localises to the golgi apparatus membrane. It localises to the cell membrane. It is found in the membrane. Its subcellular location is the caveola. The protein resides in the membrane raft. May act as a scaffolding protein within caveolar membranes. Forms a stable heterooligomeric complex with CAV2 that targets to lipid rafts and drives caveolae formation. Mediates the recruitment of CAVIN proteins (CAVIN1/2/3/4) to the caveolae. Interacts directly with G-protein alpha subunits and can functionally regulate their activity. Involved in the costimulatory signal essential for T-cell receptor (TCR)-mediated T-cell activation. Its binding to DPP4 induces T-cell proliferation and NF-kappa-B activation in a T-cell receptor/CD3-dependent manner. Recruits CTNNB1 to caveolar membranes and may regulate CTNNB1-mediated signaling through the Wnt pathway. Negatively regulates TGFB1-mediated activation of SMAD2/3 by mediating the internalization of TGFBR1 from membrane rafts leading to its subsequent degradation. Binds 20(S)-hydroxycholesterol (20(S)-OHC). The protein is Caveolin-1 (CAV1) of Aotus nancymaae (Ma's night monkey).